A 492-amino-acid chain; its full sequence is Aspartyl/glutamyl-tRNA(Asn/Gln) amidotransferase subunit B (492 aa).

Belongs to the GatB/GatE family. GatB subfamily. In terms of assembly, heterotrimer of A, B and C subunits.

It catalyses the reaction L-glutamyl-tRNA(Gln) + L-glutamine + ATP + H2O = L-glutaminyl-tRNA(Gln) + L-glutamate + ADP + phosphate + H(+). It carries out the reaction L-aspartyl-tRNA(Asn) + L-glutamine + ATP + H2O = L-asparaginyl-tRNA(Asn) + L-glutamate + ADP + phosphate + 2 H(+). Allows the formation of correctly charged Asn-tRNA(Asn) or Gln-tRNA(Gln) through the transamidation of misacylated Asp-tRNA(Asn) or Glu-tRNA(Gln) in organisms which lack either or both of asparaginyl-tRNA or glutaminyl-tRNA synthetases. The reaction takes place in the presence of glutamine and ATP through an activated phospho-Asp-tRNA(Asn) or phospho-Glu-tRNA(Gln). The protein is Aspartyl/glutamyl-tRNA(Asn/Gln) amidotransferase subunit B of Dehalococcoides mccartyi (strain ATCC BAA-2266 / KCTC 15142 / 195) (Dehalococcoides ethenogenes (strain 195)).